The sequence spans 98 residues: Putative pterin-4-alpha-carbinolamine dehydratase (98 aa).

This sequence belongs to the pterin-4-alpha-carbinolamine dehydratase family.

The catalysed reaction is (4aS,6R)-4a-hydroxy-L-erythro-5,6,7,8-tetrahydrobiopterin = (6R)-L-erythro-6,7-dihydrobiopterin + H2O. This Chelativorans sp. (strain BNC1) protein is Putative pterin-4-alpha-carbinolamine dehydratase.